The sequence spans 38 residues: MTQPNPNKQTVELNRTSLYWGLLLIFVLAVLFSNYFFN.

A helical membrane pass occupies residues 17-37 (SLYWGLLLIFVLAVLFSNYFF).

Belongs to the PsbL family. PSII is composed of 1 copy each of membrane proteins PsbA, PsbB, PsbC, PsbD, PsbE, PsbF, PsbH, PsbI, PsbJ, PsbK, PsbL, PsbM, PsbT, PsbX, PsbY, PsbZ, Psb30/Ycf12, at least 3 peripheral proteins of the oxygen-evolving complex and a large number of cofactors. It forms dimeric complexes.

The protein resides in the plastid. Its subcellular location is the chloroplast thylakoid membrane. Its function is as follows. One of the components of the core complex of photosystem II (PSII). PSII is a light-driven water:plastoquinone oxidoreductase that uses light energy to abstract electrons from H(2)O, generating O(2) and a proton gradient subsequently used for ATP formation. It consists of a core antenna complex that captures photons, and an electron transfer chain that converts photonic excitation into a charge separation. This subunit is found at the monomer-monomer interface and is required for correct PSII assembly and/or dimerization. The sequence is that of Photosystem II reaction center protein L from Angiopteris evecta (Mule's foot fern).